Here is a 109-residue protein sequence, read N- to C-terminus: MSAQPVDIQIFGRTLRVNCPPEQQEALNQAAEDLNQRLQNLKVRTRVTNTEQLVFIAALNVCHELAQERLKTRDYAANMEQRIRLLQQTIEQALVEQGRITERPGNQFE.

Residues 21–97 (PEQQEALNQA…QTIEQALVEQ (77 aa)) adopt a coiled-coil conformation.

It belongs to the ZapA family. Type 1 subfamily. As to quaternary structure, homodimer. Interacts with FtsZ.

It is found in the cytoplasm. Its function is as follows. Activator of cell division through the inhibition of FtsZ GTPase activity, therefore promoting FtsZ assembly into bundles of protofilaments necessary for the formation of the division Z ring. It is recruited early at mid-cell but it is not essential for cell division. The chain is Cell division protein ZapA from Sodalis glossinidius (strain morsitans).